The sequence spans 233 residues: Cytidylate kinase (233 aa).

15–23 (GPSGAGKSS) is a binding site for ATP. Residues 183 to 200 (QRDRQDEGREHAPLKQAE) show a composition bias toward basic and acidic residues. Residues 183-203 (QRDRQDEGREHAPLKQAEDAV) form a disordered region.

The protein belongs to the cytidylate kinase family. Type 1 subfamily.

Its subcellular location is the cytoplasm. It carries out the reaction CMP + ATP = CDP + ADP. The catalysed reaction is dCMP + ATP = dCDP + ADP. This Geobacter sp. (strain M21) protein is Cytidylate kinase.